Consider the following 195-residue polypeptide: Probable GTP-binding protein EngB (195 aa).

An EngB-type G domain is found at 24–195 (DIPEIALAGR…AAWDAILSKI (172 aa)). GTP contacts are provided by residues 32-39 (GRSNVGKS), 59-63 (GKTQL), 77-80 (DVPG), 144-147 (TKAD), and 176-178 (FSS). Mg(2+)-binding residues include Ser39 and Thr61.

This sequence belongs to the TRAFAC class TrmE-Era-EngA-EngB-Septin-like GTPase superfamily. EngB GTPase family. Requires Mg(2+) as cofactor.

Its function is as follows. Necessary for normal cell division and for the maintenance of normal septation. The chain is Probable GTP-binding protein EngB from Streptococcus sanguinis (strain SK36).